The following is a 161-amino-acid chain: SsrA-binding protein (161 aa).

Residues 139–153 (RESIKRKEENRELDR) show a composition bias toward basic and acidic residues. The segment at 139–161 (RESIKRKEENRELDRLRKRRRQE) is disordered.

It belongs to the SmpB family.

It localises to the cytoplasm. Functionally, required for rescue of stalled ribosomes mediated by trans-translation. Binds to transfer-messenger RNA (tmRNA), required for stable association of tmRNA with ribosomes. tmRNA and SmpB together mimic tRNA shape, replacing the anticodon stem-loop with SmpB. tmRNA is encoded by the ssrA gene; the 2 termini fold to resemble tRNA(Ala) and it encodes a 'tag peptide', a short internal open reading frame. During trans-translation Ala-aminoacylated tmRNA acts like a tRNA, entering the A-site of stalled ribosomes, displacing the stalled mRNA. The ribosome then switches to translate the ORF on the tmRNA; the nascent peptide is terminated with the 'tag peptide' encoded by the tmRNA and targeted for degradation. The ribosome is freed to recommence translation, which seems to be the essential function of trans-translation. This chain is SsrA-binding protein, found in Syntrophobacter fumaroxidans (strain DSM 10017 / MPOB).